A 133-amino-acid polypeptide reads, in one-letter code: Alpha-amylase inhibitor/endochitinase (133 aa).

Residue E30 is the Proton donor of the active site.

This sequence belongs to the glycosyl hydrolase 19 family. Chitinase class I subfamily.

It catalyses the reaction Random endo-hydrolysis of N-acetyl-beta-D-glucosaminide (1-&gt;4)-beta-linkages in chitin and chitodextrins.. This protein functions both as an alpha-amylase inhibitor and as a chitinase. The chain is Alpha-amylase inhibitor/endochitinase from Coix lacryma-jobi (Job's tears).